The primary structure comprises 260 residues: Pyridoxine 5'-phosphate synthase (260 aa).

3-amino-2-oxopropyl phosphate-binding residues include asparagine 10 and arginine 21. The active-site Proton acceptor is the histidine 46. Residues arginine 48 and histidine 53 each contribute to the 1-deoxy-D-xylulose 5-phosphate site. The active-site Proton acceptor is the glutamate 76. Position 113 (threonine 113) interacts with 1-deoxy-D-xylulose 5-phosphate. The active-site Proton donor is the histidine 204. 3-amino-2-oxopropyl phosphate is bound by residues aspartate 205 and 227-228; that span reads GH.

Belongs to the PNP synthase family. As to quaternary structure, homooctamer; tetramer of dimers.

Its subcellular location is the cytoplasm. The catalysed reaction is 3-amino-2-oxopropyl phosphate + 1-deoxy-D-xylulose 5-phosphate = pyridoxine 5'-phosphate + phosphate + 2 H2O + H(+). It functions in the pathway cofactor biosynthesis; pyridoxine 5'-phosphate biosynthesis; pyridoxine 5'-phosphate from D-erythrose 4-phosphate: step 5/5. Its function is as follows. Catalyzes the complicated ring closure reaction between the two acyclic compounds 1-deoxy-D-xylulose-5-phosphate (DXP) and 3-amino-2-oxopropyl phosphate (1-amino-acetone-3-phosphate or AAP) to form pyridoxine 5'-phosphate (PNP) and inorganic phosphate. The chain is Pyridoxine 5'-phosphate synthase from Xylella fastidiosa (strain M12).